Consider the following 78-residue polypeptide: Large ribosomal subunit protein bL28 (78 aa).

Belongs to the bacterial ribosomal protein bL28 family.

In Acaryochloris marina (strain MBIC 11017), this protein is Large ribosomal subunit protein bL28.